We begin with the raw amino-acid sequence, 167 residues long: Transcription factor 24 (167 aa).

Over residues 1 to 23 (MDRGRPAGSPLSASAEPAPLAAA) the composition is skewed to low complexity. Residues 1–60 (MDRGRPAGSPLSASAEPAPLAAAIRDSRPGRTGPGPAGPGGGSRSGSGRPAAANAARERS) form a disordered region. The segment covering 32 to 45 (TGPGPAGPGGGSRS) has biased composition (gly residues). The segment covering 46-55 (GSGRPAAANA) has biased composition (low complexity). The bHLH domain maps to 49–101 (RPAAANAARERSRVQTLRHAFLELQRTLPSVPPDTKLSKLDVLLLATTYIAHL).

Efficient DNA binding requires dimerization with another bHLH protein.

The protein localises to the nucleus. Functionally, putative transcription factor. The sequence is that of Transcription factor 24 (TCF24) from Homo sapiens (Human).